We begin with the raw amino-acid sequence, 1038 residues long: uncharacterized protein (1038 aa).

A compositionally biased stretch (polar residues) spans methionine 1–glycine 14. Residues methionine 1–serine 100 are disordered. Positions asparagine 58–isoleucine 71 are enriched in basic and acidic residues. Over residues isoleucine 72 to asparagine 83 the composition is skewed to acidic residues. A phosphoserine mark is found at serine 112, serine 113, and serine 114. Disordered regions lie at residues glycine 144 to arginine 201, glutamate 360 to alanine 381, serine 422 to leucine 441, glutamine 454 to leucine 526, and threonine 556 to threonine 575. Positions serine 156 to glutamine 179 are enriched in low complexity. Basic and acidic residues predominate over residues aspartate 180–valine 198. 2 stretches are compositionally biased toward basic and acidic residues: residues histidine 426–leucine 441 and aspartate 489–proline 505. Serine 436 carries the phosphoserine modification. Over residues serine 506 to proline 522 the composition is skewed to polar residues. A phosphoserine mark is found at serine 618 and serine 856. Disordered stretches follow at residues arginine 803–aspartate 864, glycine 940–arginine 974, and lysine 1005–lysine 1024. A compositionally biased stretch (low complexity) spans threonine 826 to serine 859. Residues valine 955–arginine 974 are compositionally biased toward polar residues. The span at glutamate 1009–isoleucine 1020 shows a compositional bias: low complexity.

It localises to the cytoplasm. This is an uncharacterized protein from Schizosaccharomyces pombe (strain 972 / ATCC 24843) (Fission yeast).